A 224-amino-acid polypeptide reads, in one-letter code: Adenylate kinase (224 aa).

10–15 contributes to the ATP binding site; the sequence is GSGKST. Residues 30 to 59 form an NMP region; the sequence is SSGDLIRGEIERKSSLGLEMAAYLSRGDLI. Residues serine 31, arginine 36, 57-59, 83-86, and glutamine 90 each bind AMP; these read DLI and GYPR. The interval 124–161 is LID; that stretch reads GRRICPNCGAVYHITYNPPKVPGICDVCGTKLIQRTDD. Arginine 125 provides a ligand contact to ATP. Residues cysteine 128 and cysteine 131 each contribute to the Zn(2+) site. 134-135 provides a ligand contact to ATP; that stretch reads VY. The Zn(2+) site is built by cysteine 148 and cysteine 151. AMP-binding residues include arginine 158 and arginine 169. Glycine 197 provides a ligand contact to ATP.

Belongs to the adenylate kinase family. In terms of assembly, monomer.

Its subcellular location is the cytoplasm. It carries out the reaction AMP + ATP = 2 ADP. The protein operates within purine metabolism; AMP biosynthesis via salvage pathway; AMP from ADP: step 1/1. Catalyzes the reversible transfer of the terminal phosphate group between ATP and AMP. Plays an important role in cellular energy homeostasis and in adenine nucleotide metabolism. The sequence is that of Adenylate kinase from Thermococcus gammatolerans (strain DSM 15229 / JCM 11827 / EJ3).